The following is a 312-amino-acid chain: Olfactory receptor 5p57 (312 aa).

Over M1–V25 the chain is Extracellular. N5 carries an N-linked (GlcNAc...) asparagine glycan. The helical transmembrane segment at I26 to I46 threads the bilayer. Over V47–Q54 the chain is Cytoplasmic. The helical transmembrane segment at L55–S75 threads the bilayer. Topologically, residues S76–A99 are extracellular. The cysteines at positions 97 and 189 are disulfide-linked. Residues Q100 to Y120 traverse the membrane as a helical segment. Residues D121–S133 lie on the Cytoplasmic side of the membrane. The helical transmembrane segment at T134–V154 threads the bilayer. At N155–E196 the chain is on the extracellular side. A glycan (N-linked (GlcNAc...) asparagine) is linked at N165. The chain crosses the membrane as a helical span at residues V197 to S217. The Cytoplasmic segment spans residues Y218–A237. A helical membrane pass occupies residues F238–I258. Residues Y259 to N271 lie on the Extracellular side of the membrane. Residues K272–F292 form a helical membrane-spanning segment. Residues R293–S312 are Cytoplasmic-facing.

Belongs to the G-protein coupled receptor 1 family.

The protein resides in the cell membrane. Functionally, probable odorant receptor, which recognizes only aliphatic alcohols, suggesting that it may convey a 'woody' or 'sweet' sour. This Mus musculus (Mouse) protein is Olfactory receptor 5p57.